A 193-amino-acid polypeptide reads, in one-letter code: Hydroxyacylglutathione hydrolase-like protein (193 aa).

5 residues coordinate Zn(2+): H54, H56, D58, H59, and H110.

Belongs to the metallo-beta-lactamase superfamily. Glyoxalase II family. Zn(2+) serves as cofactor.

Its function is as follows. Hydrolase acting on ester bonds. This is Hydroxyacylglutathione hydrolase-like protein (HAGHL) from Bos taurus (Bovine).